The chain runs to 324 residues: Homoserine kinase (324 aa).

Residue 100 to 110 (PLSSGMGSSAA) coordinates ATP.

This sequence belongs to the GHMP kinase family. Homoserine kinase subfamily.

It localises to the cytoplasm. It catalyses the reaction L-homoserine + ATP = O-phospho-L-homoserine + ADP + H(+). It participates in amino-acid biosynthesis; L-threonine biosynthesis; L-threonine from L-aspartate: step 4/5. In terms of biological role, catalyzes the ATP-dependent phosphorylation of L-homoserine to L-homoserine phosphate. In Chlorobaculum tepidum (strain ATCC 49652 / DSM 12025 / NBRC 103806 / TLS) (Chlorobium tepidum), this protein is Homoserine kinase.